A 134-amino-acid chain; its full sequence is Ribonuclease P protein component (134 aa).

This sequence belongs to the RnpA family. Consists of a catalytic RNA component (M1 or rnpB) and a protein subunit.

It carries out the reaction Endonucleolytic cleavage of RNA, removing 5'-extranucleotides from tRNA precursor.. In terms of biological role, RNaseP catalyzes the removal of the 5'-leader sequence from pre-tRNA to produce the mature 5'-terminus. It can also cleave other RNA substrates such as 4.5S RNA. The protein component plays an auxiliary but essential role in vivo by binding to the 5'-leader sequence and broadening the substrate specificity of the ribozyme. The protein is Ribonuclease P protein component of Pseudomonas putida (strain ATCC 700007 / DSM 6899 / JCM 31910 / BCRC 17059 / LMG 24140 / F1).